A 1793-amino-acid polypeptide reads, in one-letter code: uncharacterized protein (1793 aa).

Disordered stretches follow at residues 156–189, 204–362, and 407–505; these read ARQA…ASSQ, QRES…PPKV, and ASFG…SGAA. Over residues 166-175 the composition is skewed to polar residues; the sequence is SSAQDSQELK. Basic and acidic residues predominate over residues 227 to 237; that stretch reads SPKEKAQDEPS. Positions 238–247 are enriched in polar residues; sequence SKTPSPQNNP. The span at 248–258 shows a compositional bias: low complexity; sequence ASSQLSRSQHS. The span at 277–288 shows a compositional bias: basic and acidic residues; sequence KAEEDGLSKMED. Low complexity predominate over residues 289–307; that stretch reads STTSTGALATSSSSLGFES. Residues 317–342 show a composition bias toward gly residues; that stretch reads AVGGEGEKISGGGGGGKGGGGGGAGD. Residues 434-450 are compositionally biased toward low complexity; the sequence is STTPSTNTTRTPSPTSS. Over residues 463–476 the composition is skewed to polar residues; it reads DTSSTEVGSGPSDS. Low complexity predominate over residues 485–505; the sequence is PGTAPLTEPLPETPEAASGAA. Residue Thr733 is modified to Phosphothreonine. Disordered stretches follow at residues 757–809, 829–917, 1090–1147, 1161–1187, 1229–1249, 1408–1465, and 1482–1567; these read RSES…SKFA, MERG…FTDG, RDIR…GSGS, QRED…NSSS, QKTP…ATKP, TGGV…KSNS, and GELL…PLPF. Composition is skewed to basic and acidic residues over residues 829–839 and 846–872; these read MERGEVMDTSH and KETE…HSEA. Over residues 1113-1123 the composition is skewed to low complexity; sequence KGSGDSSDKGS. Basic and acidic residues predominate over residues 1161 to 1174; that stretch reads QREDSMDREPRESM. Residue Ser1187 is modified to Phosphoserine. The segment covering 1231 to 1246 has biased composition (basic and acidic residues); sequence TPEKLKEEEVKEEGKA. Residues 1513-1528 show a composition bias toward low complexity; it reads SQVPSSSKGSQVSGTS. Pro residues predominate over residues 1546-1555; the sequence is PPGPQSPEHP. Omega-N-methylarginine is present on Arg1774.

Expressed in muscle, heart, kidney and liver but barely detectable in lung, pancreas and brain. In liver veins, expressed in hepatic vein, extrahepatic portal vein and intrahepatic portal vein.

This is an uncharacterized protein from Homo sapiens (Human).